Consider the following 1059-residue polypeptide: Carbamoyl phosphate synthase large chain (1059 aa).

Residues 1 to 401 (MPKRTDIHKI…ALLKAVASLE (401 aa)) form a carboxyphosphate synthetic domain region. ATP contacts are provided by Arg-129, Arg-169, Gly-175, Gly-176, Lys-208, Ile-210, Glu-215, Gly-241, Ile-242, His-243, Gln-284, and Glu-298. The 195-residue stretch at 133–327 (KELMQELGEP…IAKLAAKIAV (195 aa)) folds into the ATP-grasp 1 domain. Mg(2+)-binding residues include Gln-284, Glu-298, and Asn-300. The Mn(2+) site is built by Gln-284, Glu-298, and Asn-300. The tract at residues 402-546 (IDQKDLLSKE…YSTYETENES (145 aa)) is oligomerization domain. Residues 547 to 929 (RRSAKPSVLV…ALYKAFAGAG (383 aa)) are carbamoyl phosphate synthetic domain. Positions 671–861 (DQVIKDLNLR…MAQLATKVIL (191 aa)) constitute an ATP-grasp 2 domain. Residues Arg-707, Ala-746, Leu-748, Glu-752, Gly-777, Val-778, His-779, Ser-780, Gln-820, and Glu-832 each coordinate ATP. The Mg(2+) site is built by Gln-820, Glu-832, and Asn-834. Mn(2+)-binding residues include Gln-820, Glu-832, and Asn-834. The MGS-like domain maps to 930 to 1059 (MEVPDNGAVL…EMTSFKTTEL (130 aa)). The interval 930-1059 (MEVPDNGAVL…EMTSFKTTEL (130 aa)) is allosteric domain.

The protein belongs to the CarB family. In terms of assembly, composed of two chains; the small (or glutamine) chain promotes the hydrolysis of glutamine to ammonia, which is used by the large (or ammonia) chain to synthesize carbamoyl phosphate. Tetramer of heterodimers (alpha,beta)4. It depends on Mg(2+) as a cofactor. Requires Mn(2+) as cofactor.

The enzyme catalyses hydrogencarbonate + L-glutamine + 2 ATP + H2O = carbamoyl phosphate + L-glutamate + 2 ADP + phosphate + 2 H(+). It carries out the reaction hydrogencarbonate + NH4(+) + 2 ATP = carbamoyl phosphate + 2 ADP + phosphate + 2 H(+). The protein operates within amino-acid biosynthesis; L-arginine biosynthesis; carbamoyl phosphate from bicarbonate: step 1/1. Its pathway is pyrimidine metabolism; UMP biosynthesis via de novo pathway; (S)-dihydroorotate from bicarbonate: step 1/3. In terms of biological role, large subunit of the glutamine-dependent carbamoyl phosphate synthetase (CPSase). CPSase catalyzes the formation of carbamoyl phosphate from the ammonia moiety of glutamine, carbonate, and phosphate donated by ATP, constituting the first step of 2 biosynthetic pathways, one leading to arginine and/or urea and the other to pyrimidine nucleotides. The large subunit (synthetase) binds the substrates ammonia (free or transferred from glutamine from the small subunit), hydrogencarbonate and ATP and carries out an ATP-coupled ligase reaction, activating hydrogencarbonate by forming carboxy phosphate which reacts with ammonia to form carbamoyl phosphate. In Limosilactobacillus fermentum (strain NBRC 3956 / LMG 18251) (Lactobacillus fermentum), this protein is Carbamoyl phosphate synthase large chain.